The chain runs to 239 residues: LexA repressor (239 aa).

Residues 26–46 (FDEMKDALDLASKSGIHRLIT) constitute a DNA-binding region (H-T-H motif). Active-site for autocatalytic cleavage activity residues include Ser-159 and Lys-197.

This sequence belongs to the peptidase S24 family. As to quaternary structure, homodimer.

It catalyses the reaction Hydrolysis of Ala-|-Gly bond in repressor LexA.. Functionally, represses a number of genes involved in the response to DNA damage (SOS response), including recA and lexA. In the presence of single-stranded DNA, RecA interacts with LexA causing an autocatalytic cleavage which disrupts the DNA-binding part of LexA, leading to derepression of the SOS regulon and eventually DNA repair. The polypeptide is LexA repressor (Rhizobium etli (strain CIAT 652)).